We begin with the raw amino-acid sequence, 319 residues long: 2-dehydropantoate 2-reductase (319 aa).

NADP(+) is bound by residues 10-15 (GTGALG) and asparagine 105. Residue asparagine 105 coordinates substrate. The active-site Proton donor is the lysine 192. Residues asparagine 196, asparagine 200, and serine 262 each contribute to the substrate site. Residue glutamate 274 coordinates NADP(+).

Belongs to the ketopantoate reductase family.

The protein localises to the cytoplasm. The catalysed reaction is (R)-pantoate + NADP(+) = 2-dehydropantoate + NADPH + H(+). It functions in the pathway cofactor biosynthesis; (R)-pantothenate biosynthesis; (R)-pantoate from 3-methyl-2-oxobutanoate: step 2/2. In terms of biological role, catalyzes the NADPH-dependent reduction of ketopantoate into pantoic acid. This Nostoc sp. (strain PCC 7120 / SAG 25.82 / UTEX 2576) protein is 2-dehydropantoate 2-reductase.